A 495-amino-acid chain; its full sequence is Trigger factor (495 aa).

Residues 169-254 (GDRVAMDYVG…VKDVAAPGAV (86 aa)) enclose the PPIase FKBP-type domain. Residues 441-495 (LAEDEGEAKAETKKAAPKKKAAAKTEAAEAGEGEEAAAPKKKAAPKKKAADESAE) form a disordered region.

This sequence belongs to the FKBP-type PPIase family. Tig subfamily.

The protein localises to the cytoplasm. The catalysed reaction is [protein]-peptidylproline (omega=180) = [protein]-peptidylproline (omega=0). Its function is as follows. Involved in protein export. Acts as a chaperone by maintaining the newly synthesized protein in an open conformation. Functions as a peptidyl-prolyl cis-trans isomerase. This chain is Trigger factor, found in Rhizobium etli (strain CIAT 652).